Reading from the N-terminus, the 150-residue chain is Nucleoside diphosphate kinase (150 aa).

6 residues coordinate ATP: lysine 9, phenylalanine 57, arginine 85, threonine 91, arginine 102, and asparagine 112. Histidine 115 functions as the Pros-phosphohistidine intermediate in the catalytic mechanism.

Belongs to the NDK family. Homotetramer. The cofactor is Mg(2+).

The protein resides in the cytoplasm. The enzyme catalyses a 2'-deoxyribonucleoside 5'-diphosphate + ATP = a 2'-deoxyribonucleoside 5'-triphosphate + ADP. It catalyses the reaction a ribonucleoside 5'-diphosphate + ATP = a ribonucleoside 5'-triphosphate + ADP. Functionally, major role in the synthesis of nucleoside triphosphates other than ATP. The ATP gamma phosphate is transferred to the NDP beta phosphate via a ping-pong mechanism, using a phosphorylated active-site intermediate. This chain is Nucleoside diphosphate kinase, found in Thermosynechococcus vestitus (strain NIES-2133 / IAM M-273 / BP-1).